We begin with the raw amino-acid sequence, 225 residues long: Myelin-associated neurite-outgrowth inhibitor (225 aa).

The Cytoplasmic portion of the chain corresponds to Met1 to His58. A helical membrane pass occupies residues Val59 to Ala75. The Extracellular portion of the chain corresponds to Arg76–Asn173. Residues Gly174–Leu193 traverse the membrane as a helical segment. Residues Thr194–Trp225 lie on the Cytoplasmic side of the membrane.

It belongs to the FAM168 family.

Its subcellular location is the cytoplasm. It localises to the perinuclear region. The protein resides in the cell membrane. It is found in the cell projection. The protein localises to the axon. Its function is as follows. Inhibitor of neuronal axonal outgrowth. The protein is Myelin-associated neurite-outgrowth inhibitor (fam168b) of Xenopus laevis (African clawed frog).